Here is a 398-residue protein sequence, read N- to C-terminus: Probable peptidoglycan glycosyltransferase FtsW (398 aa).

The Cytoplasmic segment spans residues Met-1–Arg-20. The helical transmembrane segment at Phe-21–Met-41 threads the bilayer. Residues Val-42 to Ser-57 lie on the Periplasmic side of the membrane. Residues Phe-58–Ala-78 form a helical membrane-spanning segment. Topologically, residues Ala-79–Ser-92 are cytoplasmic. A helical transmembrane segment spans residues Leu-93–Val-113. Residues Asn-114–Asn-121 lie on the Periplasmic side of the membrane. A helical membrane pass occupies residues Leu-122–Ala-142. Residues Gly-143–Arg-153 are Cytoplasmic-facing. A helical transmembrane segment spans residues Thr-154–Leu-174. At Lys-175–Pro-177 the chain is on the periplasmic side. The helical transmembrane segment at Asp-178–Ala-198 threads the bilayer. Position 199 (Arg-199) is a topological domain, cytoplasmic. The chain crosses the membrane as a helical span at residues Leu-200–Thr-220. At Ala-221–Gly-289 the chain is on the periplasmic side. A helical membrane pass occupies residues Leu-290 to Ile-310. Residues Gly-311 to Gly-318 are Cytoplasmic-facing. The helical transmembrane segment at Asn-319–Ile-339 threads the bilayer. The Periplasmic segment spans residues Asn-340–Leu-355. The chain crosses the membrane as a helical span at residues Pro-356 to Phe-376. Residues Arg-377–Val-398 are Cytoplasmic-facing.

The protein belongs to the SEDS family. FtsW subfamily.

It is found in the cell inner membrane. It carries out the reaction [GlcNAc-(1-&gt;4)-Mur2Ac(oyl-L-Ala-gamma-D-Glu-L-Lys-D-Ala-D-Ala)](n)-di-trans,octa-cis-undecaprenyl diphosphate + beta-D-GlcNAc-(1-&gt;4)-Mur2Ac(oyl-L-Ala-gamma-D-Glu-L-Lys-D-Ala-D-Ala)-di-trans,octa-cis-undecaprenyl diphosphate = [GlcNAc-(1-&gt;4)-Mur2Ac(oyl-L-Ala-gamma-D-Glu-L-Lys-D-Ala-D-Ala)](n+1)-di-trans,octa-cis-undecaprenyl diphosphate + di-trans,octa-cis-undecaprenyl diphosphate + H(+). Its pathway is cell wall biogenesis; peptidoglycan biosynthesis. Functionally, peptidoglycan polymerase that is essential for cell division. The sequence is that of Probable peptidoglycan glycosyltransferase FtsW from Methylococcus capsulatus (strain ATCC 33009 / NCIMB 11132 / Bath).